Reading from the N-terminus, the 488-residue chain is 3-octaprenyl-4-hydroxybenzoate carboxy-lyase (488 aa).

Mn(2+) is bound at residue N172. Prenylated FMN-binding positions include 175–177, 189–191, and 194–195; these read IYR, RWL, and RG. Mn(2+) is bound at residue E238. D287 functions as the Proton donor in the catalytic mechanism.

This sequence belongs to the UbiD family. As to quaternary structure, homohexamer. It depends on prenylated FMN as a cofactor. The cofactor is Mn(2+).

Its subcellular location is the cell membrane. It carries out the reaction a 4-hydroxy-3-(all-trans-polyprenyl)benzoate + H(+) = a 2-(all-trans-polyprenyl)phenol + CO2. It participates in cofactor biosynthesis; ubiquinone biosynthesis. In terms of biological role, catalyzes the decarboxylation of 3-octaprenyl-4-hydroxy benzoate to 2-octaprenylphenol, an intermediate step in ubiquinone biosynthesis. This is 3-octaprenyl-4-hydroxybenzoate carboxy-lyase from Pseudomonas paraeruginosa (strain DSM 24068 / PA7) (Pseudomonas aeruginosa (strain PA7)).